Reading from the N-terminus, the 98-residue chain is Cell division topological specificity factor (98 aa).

This sequence belongs to the MinE family.

Prevents the cell division inhibition by proteins MinC and MinD at internal division sites while permitting inhibition at polar sites. This ensures cell division at the proper site by restricting the formation of a division septum at the midpoint of the long axis of the cell. This chain is Cell division topological specificity factor, found in Moorella thermoacetica (strain ATCC 39073 / JCM 9320).